A 727-amino-acid polypeptide reads, in one-letter code: ABC transporter G family member 6 (727 aa).

In terms of domain architecture, ABC transporter spans 68 to 333 (LSFTDLTYSV…FAEFGHPIPE (266 aa)). An ATP-binding site is contributed by 126–133 (GASGSGKS). The ABC transmembrane type-2 domain maps to 421 to 631 (VELAVLAKRS…PYEAVLLNEF (211 aa)). A run of 6 helical transmembrane segments spans residues 440 to 460 (LFGI…TMFW), 475 to 495 (CFAF…PVFL), 517 to 537 (LSHS…FAAI), 560 to 580 (ASFW…PHVM), 581 to 601 (LGYT…GFFI), and 700 to 720 (LWVT…SLLL).

This sequence belongs to the ABC transporter superfamily. ABCG family. Eye pigment precursor importer (TC 3.A.1.204) subfamily.

Its subcellular location is the membrane. This chain is ABC transporter G family member 6 (ABCG6), found in Arabidopsis thaliana (Mouse-ear cress).